A 1692-amino-acid polypeptide reads, in one-letter code: Regulating synaptic membrane exocytosis protein 1 (1692 aa).

The disordered stretch occupies residues 1–26 (MSSAVGPRGPRPPTVPPPMQELPDLS). Residues 9 to 20 (GPRPPTVPPPMQ) show a composition bias toward pro residues. The RabBD domain maps to 22–182 (LPDLSHLTEE…TKSGAWFFGS (161 aa)). The segment at 110-170 (KDDAPTCGIC…VCNLCRKQQE (61 aa)) adopts an FYVE-type zinc-finger fold. Zn(2+) contacts are provided by Cys-116, Cys-119, Cys-132, Cys-135, Cys-140, Cys-143, Cys-162, and Cys-165. Over residues 183–199 (GPQQTSQDGTLSDTATG) the composition is skewed to polar residues. The interval 183–555 (GPQQTSQDGT…CEDVELESES (373 aa)) is disordered. Residues 204–217 (VPREKKARLQERSR) show a composition bias toward basic and acidic residues. Residues 223-234 (STAAASSQDAAP) are compositionally biased toward low complexity. Residues 305-357 (VEERERKERRESRRLEKGRSQDYPDTPEKRDEGKAADEEKQRKEEDYQTRYRS) show a composition bias toward basic and acidic residues. Basic residues predominate over residues 377–388 (MHARVSRARHER). Over residues 412-430 (RAPAAARASPPDSPRAYSA) the composition is skewed to low complexity. Basic and acidic residues predominate over residues 462 to 475 (PELKAQEPLRKQSR). The span at 497–509 (RNDSLSSDQSESV) shows a compositional bias: polar residues. The residue at position 500 (Ser-500) is a Phosphoserine. The span at 515–527 (KPHRSKRGGKKRQ) shows a compositional bias: basic residues. Acidic residues predominate over residues 545–555 (SCEDVELESES). Phosphoserine is present on Ser-578. One can recognise a PDZ domain in the interval 605-691 (RTTMPKDSGA…EPQVEIIVSR (87 aa)). The disordered stretch occupies residues 698–732 (RIPESSHPPLESSSSSFESQKMERPSISVISPTSP). Positions 700 to 716 (PESSHPPLESSSSSFES) are enriched in low complexity. Phosphoserine is present on residues Ser-728 and Ser-731. The 124-residue stretch at 742–865 (LPGQLSVKLW…ALLDDEPHWY (124 aa)) folds into the C2 1 domain. The interval 870–1013 (HDESSLPLPQ…RTRDVDSQYL (144 aa)) is disordered. Residue Ser-881 is modified to Phosphoserine. Residues 935–944 (STTLTVPEQQ) are compositionally biased toward polar residues. Ser-977 is subject to Phosphoserine. Residues 992–1009 (RHHDASRSPVDHRTRDVD) are compositionally biased toward basic and acidic residues. Phosphoserine is present on Ser-1031. Disordered stretches follow at residues 1118–1222 (NCLR…EHSS) and 1235–1278 (GGSA…PVRS). 2 stretches are compositionally biased toward basic and acidic residues: residues 1128-1144 (SPERERGRWSPSLDRRR) and 1157-1170 (PENDRHSRKSERSS). Residue Ser-1252 is modified to Phosphoserine. Residues 1252–1265 (SPTQSPPADTSFSS) are compositionally biased toward polar residues. Residue Thr-1254 is modified to Phosphothreonine. Residues Ser-1256, Ser-1308, Ser-1310, Ser-1311, Ser-1339, Ser-1340, and Ser-1342 each carry the phosphoserine modification. Disordered stretches follow at residues 1332–1394 (CDNV…SGRS), 1408–1428 (LEHNDGSQSDTAVGTVGAGGK), and 1445–1495 (RSRS…GSIN). Residues 1345 to 1366 (SDVSAISRTSSASRLSSTSFMS) are compositionally biased toward low complexity. Ser-1416 is modified (phosphoserine). A compositionally biased stretch (basic and acidic residues) spans 1477-1490 (EMRKMVRQPSREST). The C2 2 domain occupies 1538-1656 (AMGDIQIGME…DLSSMVIGWY (119 aa)). A phosphoserine mark is found at Ser-1677, Ser-1680, Ser-1683, and Ser-1692.

Binds RAB3A, RAB3B and RAB3D that have been activated by GTP-binding. Interacts with RAB3C, RAB10, RAB26 and RAB37. Binds UNC13A. Interacts with TSPOAP1 and RIMBP2. Interacts with PPFIA3 and PPFIA4. Interacts with ERC1. Binds SNAP25, SYT1 and CACNA1B. Interaction with SYT1 is enhanced by calcium ions. Interaction with SNAP25 is weaker in the presence of calcium ions. In terms of processing, phosphorylated by BRSK1. As to expression, expressed in melanocytes. Detected in brain and retina.

The protein localises to the cell membrane. Its subcellular location is the synapse. It localises to the presynaptic cell membrane. In terms of biological role, rab effector involved in exocytosis. May act as scaffold protein that regulates neurotransmitter release at the active zone. Essential for maintaining normal probability of neurotransmitter release and for regulating release during short-term synaptic plasticity. Plays a role in dendrite formation by melanocytes. This Homo sapiens (Human) protein is Regulating synaptic membrane exocytosis protein 1 (RIMS1).